The sequence spans 505 residues: Maturase K (505 aa).

This sequence belongs to the intron maturase 2 family. MatK subfamily.

It localises to the plastid. Its subcellular location is the chloroplast. In terms of biological role, usually encoded in the trnK tRNA gene intron. Probably assists in splicing its own and other chloroplast group II introns. This is Maturase K from Elaeagnus umbellata (Autumn olive).